The sequence spans 365 residues: RISC-loading complex subunit TARBP2 (365 aa).

Sufficient for interaction with PRKRA stretches follow at residues 22–105 (MLAA…EPAL), 151–233 (SPQQ…DARD), and 286–365 (LGAL…AGSK). Positions 30–97 (TPISLLQEYG…AEVALKHLKG (68 aa)) constitute a DRBM 1 domain. Ser151 is subject to Phosphoserine. 2 DRBM domains span residues 158–226 (NPVG…RVHT) and 292–360 (ACCS…YLRI). The sufficient for interaction with DICER1 stretch occupies residues 227 to 365 (VPLDARDGNE…QYLRIMAGSK (139 aa)).

The protein belongs to the TARBP2 family. In terms of assembly, self-associates. Component of the RISC loading complex (RLC), or micro-RNA (miRNA) loading complex (miRLC), which is composed of DICER1, AGO2 and TARBP2. Note that the trimeric RLC/miRLC is also referred to as RISC. Interacts with EIF2AK2/PKR and inhibits its protein kinase activity. Interacts with DHX9. Interacts with DICER1 and PRKRA. Interacts with DICER1, AGO2, MOV10, EIF6 and RPL7A (60S ribosome subunit); they form a large RNA-induced silencing complex (RISC). Interacts with IRF7; this interaction prevents IRF7 phosphorylation and activation.

The protein resides in the cytoplasm. Its subcellular location is the perinuclear region. It localises to the nucleus. Its function is as follows. Required for formation of the RNA induced silencing complex (RISC). Component of the RISC loading complex (RLC), also known as the micro-RNA (miRNA) loading complex (miRLC), which is composed of DICER1, AGO2 and TARBP2. Within the RLC/miRLC, DICER1 and TARBP2 are required to process precursor miRNAs (pre-miRNAs) to mature miRNAs and then load them onto AGO2. AGO2 bound to the mature miRNA constitutes the minimal RISC and may subsequently dissociate from DICER1 and TARBP2. May also play a role in the production of short interfering RNAs (siRNAs) from double-stranded RNA (dsRNA) by DICER1. Binds in vitro to the PRM1 3'-UTR. Seems to act as a repressor of translation. For some pre-miRNA substrates, may also alter the choice of cleavage site by DICER1. Negatively regulates IRF7-mediated IFN-beta signaling triggered by viral infection by inhibiting the phosphorylation of IRF7 and promoting its 'Lys'-48-linked ubiquitination and degradation. The chain is RISC-loading complex subunit TARBP2 (Tarbp2) from Mus musculus (Mouse).